The sequence spans 3473 residues: Genome polyprotein (3473 aa).

The stretch at 514–604 (EVQDALEKSM…RNDIEALKKK (91 aa)) forms a coiled coil. 2 disordered regions span residues 602–644 (KKKP…SEAQ) and 1278–1306 (YLAD…EGEI). Composition is skewed to polar residues over residues 607-622 (QSVT…SGTA) and 1278-1295 (YLAD…SIVN). Helical transmembrane passes span 1496 to 1516 (DKWI…LHYY) and 1595 to 1615 (MSSL…GKIP). An SF3 helicase domain is found at 1751 to 1917 (LELMNESYTY…PDVPKNEANP (167 aa)). 1777-1784 (GAPGVGKS) provides a ligand contact to ATP. Residues 2363–2383 (ILLAIGASVAVAGVAVGAVIL) traverse the membrane as a helical segment. Residues 2394-2404 (EDEEIEGEEGE) show a composition bias toward acidic residues. Disordered regions lie at residues 2394–2415 (EDEE…ESDG) and 2438–2465 (VAEA…LGLS). The span at 2438–2451 (VAEAHEEKDAEKPR) shows a compositional bias: basic and acidic residues. The Peptidase C3 domain maps to 2632–2850 (GVDRDLSMTN…YAETLTQEHL (219 aa)). Residues histidine 2680, glutamate 2717, and cysteine 2811 each act as for picornain 3C-like protease activity in the active site. One can recognise a RdRp catalytic domain in the interval 3155 to 3286 (TKGFAGDYSK…SVHEEFLDVY (132 aa)).

Post-translationally, specific enzymatic cleavages by picornain 3C-like protease in vivo yield mature proteins. Picornain 3C-like protease is autocatalytically processed.

The protein localises to the virion. It localises to the host membrane. It catalyses the reaction RNA(n) + a ribonucleoside 5'-triphosphate = RNA(n+1) + diphosphate. Functionally, picornain 3C-like protease is a thiol protease that probably cleaves the polyprotein. This is Genome polyprotein from Oryza sativa (Rice).